We begin with the raw amino-acid sequence, 339 residues long: DNA-directed RNA polymerase subunit alpha (339 aa).

The segment at 1-235 (MTIQKNWQEL…DQLNVFVNFE (235 aa)) is alpha N-terminal domain (alpha-NTD). Residues 251–339 (FNPAFLKKVD…ELAKRFEDHY (89 aa)) are alpha C-terminal domain (alpha-CTD).

Belongs to the RNA polymerase alpha chain family. In terms of assembly, homodimer. The RNAP catalytic core consists of 2 alpha, 1 beta, 1 beta' and 1 omega subunit. When a sigma factor is associated with the core the holoenzyme is formed, which can initiate transcription.

It catalyses the reaction RNA(n) + a ribonucleoside 5'-triphosphate = RNA(n+1) + diphosphate. DNA-dependent RNA polymerase catalyzes the transcription of DNA into RNA using the four ribonucleoside triphosphates as substrates. In Rhodopseudomonas palustris (strain BisA53), this protein is DNA-directed RNA polymerase subunit alpha.